Here is a 271-residue protein sequence, read N- to C-terminus: Protein CDV3 homolog (271 aa).

Residues 37 to 47 (KREVVKPKKPE) show a composition bias toward basic and acidic residues. Disordered regions lie at residues 37–151 (KREV…GHGP) and 186–271 (SQQA…DEAS). Residues 48 to 61 (VAAGGVAVVGENEN) show a composition bias toward low complexity. A compositionally biased stretch (acidic residues) spans 73–82 (VEEEWKEFEE). A compositionally biased stretch (polar residues) spans 95–114 (QLSTISSARSRTAQESSESQ). Residue Ser-134 is modified to Phosphoserine. Basic and acidic residues predominate over residues 224–242 (RPEEQRKKKNEPAFEEVRH).

This sequence belongs to the CDV3 family.

This is Protein CDV3 homolog from Drosophila melanogaster (Fruit fly).